The primary structure comprises 206 residues: Urease accessory protein UreG (206 aa).

14-21 (GPVGSGKT) contributes to the GTP binding site.

Belongs to the SIMIBI class G3E GTPase family. UreG subfamily. Homodimer. UreD, UreF and UreG form a complex that acts as a GTP-hydrolysis-dependent molecular chaperone, activating the urease apoprotein by helping to assemble the nickel containing metallocenter of UreC. The UreE protein probably delivers the nickel.

Its subcellular location is the cytoplasm. Its function is as follows. Facilitates the functional incorporation of the urease nickel metallocenter. This process requires GTP hydrolysis, probably effectuated by UreG. The chain is Urease accessory protein UreG from Brucella anthropi (strain ATCC 49188 / DSM 6882 / CCUG 24695 / JCM 21032 / LMG 3331 / NBRC 15819 / NCTC 12168 / Alc 37) (Ochrobactrum anthropi).